Here is a 209-residue protein sequence, read N- to C-terminus: Ras-like protein (209 aa).

15 to 22 (GGGGEGKS) contributes to the GTP binding site. An Effector region motif is present at residues 37 to 45 (YDPTIEESY). GTP is bound by residues 62 to 66 (DTAGQ) and 121 to 124 (NKCD). Residues Cys202 and Cys203 are each lipidated (S-palmitoyl cysteine). Cysteine methyl ester is present on Cys206. Cys206 is lipidated: S-geranylgeranyl cysteine. The propeptide at 207–209 (IVM) is removed in mature form.

It belongs to the small GTPase superfamily. Ras family.

The protein localises to the cell membrane. The catalysed reaction is GTP + H2O = GDP + phosphate + H(+). Alternates between an inactive form bound to GDP and an active form bound to GTP. Activated by a guanine nucleotide-exchange factor (GEF) and inactivated by a GTPase-activating protein (GAP). This is Ras-like protein from Laccaria bicolor (Bicoloured deceiver).